Reading from the N-terminus, the 428-residue chain is tRNA(Ile2) 2-agmatinylcytidine synthetase TiaS (428 aa).

It belongs to the TiaS family.

The protein resides in the cytoplasm. The enzyme catalyses cytidine(34) in tRNA(Ile2) + agmatine + ATP + H2O = 2-agmatinylcytidine(34) in tRNA(Ile2) + AMP + 2 phosphate + 2 H(+). Functionally, ATP-dependent agmatine transferase that catalyzes the formation of 2-agmatinylcytidine (agm2C) at the wobble position (C34) of tRNA(Ile2), converting the codon specificity from AUG to AUA. This chain is tRNA(Ile2) 2-agmatinylcytidine synthetase TiaS, found in Methanosarcina acetivorans (strain ATCC 35395 / DSM 2834 / JCM 12185 / C2A).